We begin with the raw amino-acid sequence, 436 residues long: MSTGFFGDIQKIKYEGPDSTNPLAFRYYQPDEIVLGKRMEDHLRFAVAYWHTFTWPGGDPFGGQTFLRPWFEDTMKAAKLKADVAFEFFSLLGAPYYCFHDADVRPEGKNFAENTKNLNEIVDYFAEKQAATGTKLLWGTANLFSNRRYMSGAATNPDPDVFAFAAATVKTCIDATQKLGGENYVLWGGREGYETLLNTDLKRELDQLGRFLNLVVEYKHKIGFKGTILIEPKPQEPTKHQYDYDVATVYGFLKKHGLENEVKVNIEQGHAILAGHSFEHELALANALGIFGSIDMNRNDYQSGWDTDQFPNNVPEMALAYYHVLAGGGFKTGGTNFDSKLRRQSLDPADLLIGHIGGMDCCARGLKAAAKMIEDKALSQPLADRYAGWESVEAQKLFRGEYSLDEIANWVESKDVNPQPKSGKQELLENVVNRYV.

Residues H100 and D103 contribute to the active site. Mg(2+)-binding residues include E231, E267, H270, D295, D306, D308, and D338.

This sequence belongs to the xylose isomerase family. In terms of assembly, homotetramer. Requires Mg(2+) as cofactor.

The protein localises to the cytoplasm. The enzyme catalyses alpha-D-xylose = alpha-D-xylulofuranose. The sequence is that of Xylose isomerase from Rhizobium etli (strain ATCC 51251 / DSM 11541 / JCM 21823 / NBRC 15573 / CFN 42).